Consider the following 127-residue polypeptide: MQRTLLKSKLHRVHVTQCELHYIGSCAIDEDLLEAADICEYEEIQIWNVNNGERFATYAIRGERGSGMISVNGSAARRAAVGDILIIATFARFDEQERLEHRPRLVHVDEQNRIIELPAGIPVQAAP.

Residue serine 25 is the Schiff-base intermediate with substrate; via pyruvic acid of the active site. Serine 25 bears the Pyruvic acid (Ser) mark. Threonine 57 serves as a coordination point for substrate. Tyrosine 58 serves as the catalytic Proton donor. Residue 73–75 (GSA) coordinates substrate.

It belongs to the PanD family. As to quaternary structure, heterooctamer of four alpha and four beta subunits. Requires pyruvate as cofactor. Is synthesized initially as an inactive proenzyme, which is activated by self-cleavage at a specific serine bond to produce a beta-subunit with a hydroxyl group at its C-terminus and an alpha-subunit with a pyruvoyl group at its N-terminus.

The protein resides in the cytoplasm. It carries out the reaction L-aspartate + H(+) = beta-alanine + CO2. Its pathway is cofactor biosynthesis; (R)-pantothenate biosynthesis; beta-alanine from L-aspartate: step 1/1. In terms of biological role, catalyzes the pyruvoyl-dependent decarboxylation of aspartate to produce beta-alanine. This is Aspartate 1-decarboxylase from Laribacter hongkongensis (strain HLHK9).